The primary structure comprises 638 residues: Pentatricopeptide repeat-containing protein At3g49730 (638 aa).

PPR repeat units follow at residues 130–164 (SYEVCKSMVMILSKMRQFGAVWGLIEEMRKTNPEL), 166–200 (EPELFVVLMRRFASANMVKKAVEVLDEMPKYGLEP), 201–231 (DEYVFGCLLDALCKNGSVKEASKVFEDMREK), 235–269 (NLRYFTSLLYGWCREGKLMEAKEVLVQMKEAGLEP), 270–304 (DIVVFTNLLSGYAHAGKMADAYDLMNDMRKRGFEP), 305–340 (NVNCYTVLIQALCRTEKRMDEAMRVFVEMERYGCEA), 341–375 (DIVTYTALISGFCKWGMIDKGYSVLDDMRKKGVMP), 376–410 (SQVTYMQIMVAHEKKEQFEECLELIEKMKRRGCHP), 411–445 (DLLIYNVVIRLACKLGEVKEAVRLWNEMEANGLSP), 446–480 (GVDTFVIMINGFTSQGFLIEACNHFKEMVSRGIFS), 483–513 (QYGTLKSLLNNLVRDDKLEMAKDVWSCISNK), and 520–554 (NVSAWTIWIHALYAKGHVKEACSYCLDMMEMDLMP). Residues 604–638 (LIEKAKPKGNKEGKKKGTDHQRYKGRGERSRAKAL) are disordered.

It belongs to the PPR family. P subfamily.

This chain is Pentatricopeptide repeat-containing protein At3g49730, found in Arabidopsis thaliana (Mouse-ear cress).